A 592-amino-acid chain; its full sequence is Transmembrane 9 superfamily member 2 (592 aa).

A signal peptide spans 1–24; sequence MRTPTTILLLVGAILFSGAGYVRS. Over 25–229 the chain is Lumenal; that stretch reads DASDHRYKEG…SLPHHLEIHW (205 aa). The helical transmembrane segment at 230–250 threads the bilayer; that stretch reads FSIINSCVTVLLLTGFLATIL. Residues 251–302 lie on the Cytoplasmic side of the membrane; sequence MRVLKNDFMKYAQDEEAADDQEETGWKYIHGDVFRFPTHNSLFAASLGSGTQ. The chain crosses the membrane as a helical span at residues 303-323; sequence LFTLTIFIFMLALVGVFYPYN. Residue arginine 324 is a topological domain, lumenal. Residues 325–345 form a helical membrane-spanning segment; it reads GALFTALVVIYALTSGIAGYT. The Cytoplasmic portion of the chain corresponds to 346-362; it reads SASFYCQLEGKSWVRNL. The helical transmembrane segment at 363–383 threads the bilayer; that stretch reads LLTGCLFCGPLFLTFCFLNTV. The Lumenal segment spans residues 384–397; sequence AITYTATAALPFGT. A helical membrane pass occupies residues 398-418; the sequence is IVVIVLIWTLVTSPLLVLGGI. Over 419-452 the chain is Cytoplasmic; that stretch reads AGKNSKAEFQAPCRTTKYPREIPPLPWYRSAIPQ. Residues 453–473 traverse the membrane as a helical segment; it reads MAMAGFLPFSAIYIELYYIFA. Residues 474–485 lie on the Lumenal side of the membrane; the sequence is SVWGHRIYTIYS. A helical transmembrane segment spans residues 486-506; that stretch reads ILFIVFIILIIVTAFITVALT. The Cytoplasmic segment spans residues 507-521; it reads YFQLAAEDHQWWWRS. A helical membrane pass occupies residues 522-542; it reads FLCGGSTGLFIYAYCLYYYYA. Residues 543 to 553 are Lumenal-facing; the sequence is RSDMSGFMQTS. Residues 554-574 form a helical membrane-spanning segment; sequence FFFGYMACICYGFFLMLGTVG. The Cytoplasmic portion of the chain corresponds to 575 to 592; the sequence is FRAALLFVRHIYRSIKCE. The Endoplasmic reticulum export signal motif lies at 581–586; sequence FVRHIY. A Golgi retention signal motif is present at residues 590 to 592; the sequence is KCE.

It belongs to the nonaspanin (TM9SF) (TC 9.A.2) family.

The protein localises to the endosome membrane. Its subcellular location is the golgi apparatus membrane. In Arabidopsis thaliana (Mouse-ear cress), this protein is Transmembrane 9 superfamily member 2.